We begin with the raw amino-acid sequence, 258 residues long: Acyl-[acyl-carrier-protein]--UDP-N-acetylglucosamine O-acyltransferase (258 aa).

This sequence belongs to the transferase hexapeptide repeat family. LpxA subfamily. In terms of assembly, homotrimer.

Its subcellular location is the cytoplasm. It catalyses the reaction a (3R)-hydroxyacyl-[ACP] + UDP-N-acetyl-alpha-D-glucosamine = a UDP-3-O-[(3R)-3-hydroxyacyl]-N-acetyl-alpha-D-glucosamine + holo-[ACP]. It functions in the pathway glycolipid biosynthesis; lipid IV(A) biosynthesis; lipid IV(A) from (3R)-3-hydroxytetradecanoyl-[acyl-carrier-protein] and UDP-N-acetyl-alpha-D-glucosamine: step 1/6. Functionally, involved in the biosynthesis of lipid A, a phosphorylated glycolipid that anchors the lipopolysaccharide to the outer membrane of the cell. The sequence is that of Acyl-[acyl-carrier-protein]--UDP-N-acetylglucosamine O-acyltransferase from Pseudomonas putida (strain ATCC 47054 / DSM 6125 / CFBP 8728 / NCIMB 11950 / KT2440).